A 2566-amino-acid chain; its full sequence is Highly reducing polyketide synthase verA (2566 aa).

The region spanning 3–440 (PEPIAIIGTG…GTNAHAILES (438 aa)) is the Ketosynthase family 3 (KS3) domain. Residues 35–61 (VASEPPSTRFDNRSFYDPDPSHPGTTN) are disordered. Positions 44–54 (FDNRSFYDPDP) are enriched in basic and acidic residues. Catalysis depends on for beta-ketoacyl synthase activity residues cysteine 176, histidine 316, and histidine 360. Residues 554–880 (IFTGQGAQWP…IGLSNRGASG (327 aa)) are malonyl-CoA:ACP transacylase (MAT) domain. The active-site For malonyltransferase activity is the serine 648. The interval 950–1081 (HPLLGSLEAD…GKLLICWGNP (132 aa)) is N-terminal hotdog fold. The interval 950 to 1246 (HPLLGSLEAD…EGVHISPLGP (297 aa)) is dehydratase (DH) domain. In terms of domain architecture, PKS/mFAS DH spans 950–1250 (HPLLGSLEAD…ISPLGPPDRQ (301 aa)). The active-site Proton acceptor; for dehydratase activity is the histidine 982. Residues 1096–1250 (AGAVDIKDFY…ISPLGPPDRQ (155 aa)) form a C-terminal hotdog fold region. Aspartate 1156 serves as the catalytic Proton donor; for dehydratase activity. The tract at residues 1386–1581 (DVLSRFYKED…TGFGGIDTIT (196 aa)) is methyltransferase (CMet) domain. Positions 2127–2294 (KTYLLVGMTG…RRARNIVGSI (168 aa)) are ketoreductase (KR) domain. Residues 2411 to 2489 (EAAEIVAAGL…ALTADSVSKL (79 aa)) enclose the Carrier domain. Serine 2449 carries the post-translational modification O-(pantetheine 4'-phosphoryl)serine. The disordered stretch occupies residues 2505-2540 (KDVSGLTSPPEVPSDASRSSVSSGMDEIVTPESPSF). A compositionally biased stretch (low complexity) spans 2518 to 2527 (SDASRSSVSS).

Requires pantetheine 4'-phosphate as cofactor.

Its pathway is secondary metabolite biosynthesis; terpenoid biosynthesis. It functions in the pathway mycotoxin biosynthesis. In terms of biological role, highly reducing polyketide synthase (HR-PKS); part of the gene cluster that mediates the biosynthesis of the neurotoxin verrucosidin, a methylated alpha-pyrone polyketide that inhibits oxidative phosphorylation in mitochondria and thereby causes neurological diseases. The carbon backbone of verrucosidin is synthesized by the HR-PKS verA, and further modified by the other verrucodidin cluster enzymes. This is Highly reducing polyketide synthase verA from Penicillium polonicum.